We begin with the raw amino-acid sequence, 898 residues long: Alanine--tRNA ligase (898 aa).

The Zn(2+) site is built by histidine 584, histidine 588, cysteine 686, and histidine 690.

Belongs to the class-II aminoacyl-tRNA synthetase family. Zn(2+) serves as cofactor.

Its subcellular location is the cytoplasm. It carries out the reaction tRNA(Ala) + L-alanine + ATP = L-alanyl-tRNA(Ala) + AMP + diphosphate. In terms of biological role, catalyzes the attachment of alanine to tRNA(Ala) in a two-step reaction: alanine is first activated by ATP to form Ala-AMP and then transferred to the acceptor end of tRNA(Ala). Also edits incorrectly charged Ser-tRNA(Ala) and Gly-tRNA(Ala) via its editing domain. The sequence is that of Alanine--tRNA ligase from Myxococcus xanthus (strain DK1622).